The sequence spans 128 residues: Small ribosomal subunit protein uS11 (128 aa).

It belongs to the universal ribosomal protein uS11 family. In terms of assembly, part of the 30S ribosomal subunit. Interacts with proteins S7 and S18. Binds to IF-3.

In terms of biological role, located on the platform of the 30S subunit, it bridges several disparate RNA helices of the 16S rRNA. Forms part of the Shine-Dalgarno cleft in the 70S ribosome. The chain is Small ribosomal subunit protein uS11 from Methylococcus capsulatus (strain ATCC 33009 / NCIMB 11132 / Bath).